The chain runs to 413 residues: Mitochondrial inner membrane magnesium transporter MFM1 (413 aa).

A mitochondrion-targeting transit peptide spans 1–35 (MRAFPRVLPFRHQRSYNNILLRTVRLFGSSLSSFD). Asn-202 carries an N-linked (GlcNAc...) asparagine glycan. Residues 329-349 (LMLLGIRYAIGMLSLGGALFL) traverse the membrane as a helical segment. Positions 353–356 (YGMN) match the YGMN motif. A helical transmembrane segment spans residues 367 to 387 (AYLTVTILGLISTVWLYAKGI).

The protein belongs to the CorA metal ion transporter (MIT) (TC 1.A.35) family. As to quaternary structure, forms homooligomers. Interacts with MRS2. N-glycosylated. Glycosylation is important for correct localization of the protein.

The protein resides in the mitochondrion inner membrane. Functionally, mitochondrial inner membrane magnesium transporter required for mitochondrial magnesium homeostasis. Modulates the conductance of the MRS2 channel. Involved in the splicing of mRNA group II introns in mitochondria by affecting mitochondrial magnesium concentrations, which are critical for group II intron splicing. The protein is Mitochondrial inner membrane magnesium transporter MFM1 (MFM1) of Saccharomyces cerevisiae (strain ATCC 204508 / S288c) (Baker's yeast).